Here is a 364-residue protein sequence, read N- to C-terminus: Chorismate synthase (364 aa).

NADP(+) is bound by residues Arg48 and Arg54. FMN-binding positions include 125 to 127 (RSS), Gly282, 297 to 301 (KPPAS), and Arg323.

It belongs to the chorismate synthase family. In terms of assembly, homotetramer. FMNH2 serves as cofactor.

The catalysed reaction is 5-O-(1-carboxyvinyl)-3-phosphoshikimate = chorismate + phosphate. It functions in the pathway metabolic intermediate biosynthesis; chorismate biosynthesis; chorismate from D-erythrose 4-phosphate and phosphoenolpyruvate: step 7/7. In terms of biological role, catalyzes the anti-1,4-elimination of the C-3 phosphate and the C-6 proR hydrogen from 5-enolpyruvylshikimate-3-phosphate (EPSP) to yield chorismate, which is the branch point compound that serves as the starting substrate for the three terminal pathways of aromatic amino acid biosynthesis. This reaction introduces a second double bond into the aromatic ring system. This chain is Chorismate synthase, found in Chloroflexus aurantiacus (strain ATCC 29366 / DSM 635 / J-10-fl).